The chain runs to 90 residues: DNA-binding protein HU-alpha (90 aa).

The protein belongs to the bacterial histone-like protein family. In terms of assembly, heterodimer of an alpha and a beta chain.

Its function is as follows. Histone-like DNA-binding protein which is capable of wrapping DNA to stabilize it, and thus to prevent its denaturation under extreme environmental conditions. This chain is DNA-binding protein HU-alpha (hupA), found in Salmonella typhi.